We begin with the raw amino-acid sequence, 213 residues long: FMN-dependent NADH:quinone oxidoreductase 1 (213 aa).

18-20 (SVS) is a binding site for FMN.

The protein belongs to the azoreductase type 1 family. As to quaternary structure, homodimer. It depends on FMN as a cofactor.

It catalyses the reaction 2 a quinone + NADH + H(+) = 2 a 1,4-benzosemiquinone + NAD(+). The enzyme catalyses N,N-dimethyl-1,4-phenylenediamine + anthranilate + 2 NAD(+) = 2-(4-dimethylaminophenyl)diazenylbenzoate + 2 NADH + 2 H(+). Its function is as follows. Quinone reductase that provides resistance to thiol-specific stress caused by electrophilic quinones. Functionally, also exhibits azoreductase activity. Catalyzes the reductive cleavage of the azo bond in aromatic azo compounds to the corresponding amines. In Bacillus cereus (strain ATCC 10987 / NRS 248), this protein is FMN-dependent NADH:quinone oxidoreductase 1.